The chain runs to 301 residues: Rhodopsin (301 aa).

Residues 1-18 (LHMIHLHWYQYPPMNPMM) are Extracellular-facing. A helical transmembrane segment spans residues 19–43 (YPLLLIFMLFTGILCLAGNFVTIWV). The Cytoplasmic portion of the chain corresponds to 44-55 (FMNTKSLRTPAN). A helical transmembrane segment spans residues 56 to 78 (LLVVNLAMSDFLMMFTMFPPMMV). Residues 79-92 (TCYYHTWTLGPTFC) lie on the Extracellular side of the membrane. A disulfide bond links C92 and C169. Residues 93-115 (QVYAFLGNLCGCASIWTMVFITF) traverse the membrane as a helical segment. Residues 116–118 (DRY) carry the 'Ionic lock' involved in activated form stabilization motif. Residues 116–134 (DRYNVIVKGVAGEPLSTKK) lie on the Cytoplasmic side of the membrane. A helical membrane pass occupies residues 135–155 (ASLWILTIWVLSTTWCIAPFF). Topologically, residues 156–182 (GWNHYVPEGNLTGCGTDYLSEDILSRS) are extracellular. The N-linked (GlcNAc...) asparagine glycan is linked to N165. The chain crosses the membrane as a helical span at residues 183–204 (YLYVYSTWVYFLPLAITIYCYV). The Cytoplasmic segment spans residues 205 to 245 (FIIKAVAAHEKGMRDQAKKMGIKSLRNEEAQKTSAECRLAK). Residues 246 to 267 (IAMTTVALWFIAWTPCLLINWV) traverse the membrane as a helical segment. The Extracellular segment spans residues 268–278 (GMFARSYLSPV). Residues 279 to 300 (YTIWGYVFAKANAVYNPIVYAI) form a helical membrane-spanning segment. K288 carries the post-translational modification N6-(retinylidene)lysine.

This sequence belongs to the G-protein coupled receptor 1 family. Opsin subfamily. As to quaternary structure, homodimer. Interacts with GNAQ. Post-translationally, contains one covalently linked retinal chromophore.

The protein resides in the cell projection. It is found in the rhabdomere membrane. Functionally, photoreceptor required for image-forming vision at low light intensity. Can use both retinal and 3-dehydroretinal as visual pigment. Light-induced isomerization of 11-cis to all-trans retinal triggers a conformational change that activates signaling via G-proteins. Signaling via GNAQ probably mediates the activation of phospholipase C. The polypeptide is Rhodopsin (RHO) (Procambarus seminolae (Crayfish)).